The primary structure comprises 93 residues: Small ribosomal subunit protein uS19 (93 aa).

Belongs to the universal ribosomal protein uS19 family.

Functionally, protein S19 forms a complex with S13 that binds strongly to the 16S ribosomal RNA. This Mycobacterium leprae (strain TN) protein is Small ribosomal subunit protein uS19 (rpsS).